The chain runs to 242 residues: Methylthioribulose-1-phosphate dehydratase (242 aa).

Residues 1–23 (MTDQREEPQGSNDHLVRSSDPEH) form a disordered region. Cysteine 102 contacts substrate. Zn(2+) is bound by residues histidine 119 and histidine 121. The active-site Proton donor/acceptor is the glutamate 148. A Zn(2+)-binding site is contributed by histidine 204.

This sequence belongs to the aldolase class II family. MtnB subfamily. It depends on Zn(2+) as a cofactor.

Its subcellular location is the cytoplasm. The enzyme catalyses 5-(methylsulfanyl)-D-ribulose 1-phosphate = 5-methylsulfanyl-2,3-dioxopentyl phosphate + H2O. It functions in the pathway amino-acid biosynthesis; L-methionine biosynthesis via salvage pathway; L-methionine from S-methyl-5-thio-alpha-D-ribose 1-phosphate: step 2/6. Its function is as follows. Catalyzes the dehydration of methylthioribulose-1-phosphate (MTRu-1-P) into 2,3-diketo-5-methylthiopentyl-1-phosphate (DK-MTP-1-P). This Uncinocarpus reesii (strain UAMH 1704) protein is Methylthioribulose-1-phosphate dehydratase.